A 329-amino-acid chain; its full sequence is Transposable element Tc3 transposase (329 aa).

A DNA-binding region spans residues 2–135 (PRGSALSDTE…LEFAKNNMGT (134 aa)).

This sequence belongs to the transposase 5 family. Homodimer or homotetramer.

It localises to the nucleus. In terms of biological role, binds specifically to the terminal nucleotides of the TC3 inverted repeat. Its expression results in frequent excision and transposition of endogenous TC3 elements. TC3 transposase acts by making double strand breaks at the ends of TC3 element. The excised element would then be inserted into a target sequence. The chain is Transposable element Tc3 transposase (tc3a) from Caenorhabditis elegans.